Here is a 492-residue protein sequence, read N- to C-terminus: Trypanothione reductase (492 aa).

35–52 (DVQTHHGPPHYAALGGTC) contacts FAD. Cysteines 52 and 57 form a disulfide. Histidine 461 serves as the catalytic Proton acceptor.

This sequence belongs to the class-I pyridine nucleotide-disulfide oxidoreductase family. Homodimer. FAD serves as cofactor.

Its subcellular location is the cytoplasm. The enzyme catalyses trypanothione + NADP(+) = trypanothione disulfide + NADPH + H(+). Trypanothione is the parasite analog of glutathione; this enzyme is the equivalent of glutathione reductase. In Trypanosoma brucei brucei, this protein is Trypanothione reductase (TPR).